We begin with the raw amino-acid sequence, 215 residues long: UPF0126 membrane protein DR_2368 (215 aa).

6 helical membrane passes run 15-35 (LHWL…LLGV), 39-59 (FDLF…GAIR), 75-95 (TYLW…ERLA), 101-121 (LSLF…LGAI), 123-143 (IGLG…GGGI), and 162-182 (LYAT…PHFT).

The protein belongs to the UPF0126 family.

The protein resides in the cell membrane. The chain is UPF0126 membrane protein DR_2368 from Deinococcus radiodurans (strain ATCC 13939 / DSM 20539 / JCM 16871 / CCUG 27074 / LMG 4051 / NBRC 15346 / NCIMB 9279 / VKM B-1422 / R1).